The primary structure comprises 102 residues: Urease subunit beta (102 aa).

Belongs to the urease beta subunit family. In terms of assembly, heterotrimer of UreA (gamma), UreB (beta) and UreC (alpha) subunits. Three heterotrimers associate to form the active enzyme.

It localises to the cytoplasm. The enzyme catalyses urea + 2 H2O + H(+) = hydrogencarbonate + 2 NH4(+). It functions in the pathway nitrogen metabolism; urea degradation; CO(2) and NH(3) from urea (urease route): step 1/1. The polypeptide is Urease subunit beta (Acinetobacter baylyi (strain ATCC 33305 / BD413 / ADP1)).